The following is a 196-amino-acid chain: Xanthine phosphoribosyltransferase (196 aa).

Residues leucine 26 and asparagine 33 each contribute to the xanthine site. Position 134–138 (134–138) interacts with 5-phospho-alpha-D-ribose 1-diphosphate; it reads ASGEA. Residue lysine 162 coordinates xanthine.

This sequence belongs to the purine/pyrimidine phosphoribosyltransferase family. Xpt subfamily. In terms of assembly, homodimer.

It is found in the cytoplasm. The enzyme catalyses XMP + diphosphate = xanthine + 5-phospho-alpha-D-ribose 1-diphosphate. It functions in the pathway purine metabolism; XMP biosynthesis via salvage pathway; XMP from xanthine: step 1/1. Functionally, converts the preformed base xanthine, a product of nucleic acid breakdown, to xanthosine 5'-monophosphate (XMP), so it can be reused for RNA or DNA synthesis. The sequence is that of Xanthine phosphoribosyltransferase from Moorella thermoacetica (strain ATCC 39073 / JCM 9320).